Here is a 1194-residue protein sequence, read N- to C-terminus: Pre-mRNA-processing ATP-dependent RNA helicase prp-5 (1194 aa).

3 disordered regions span residues 1–201 (MARL…KEAK), 224–248 (AVVG…ASPA), and 452–484 (ASGE…DDYG). Composition is skewed to basic and acidic residues over residues 21 to 37 (RKDD…GPVD) and 44 to 154 (SPID…RDQP). Residues 156-176 (PGNTTAKENEPAKSTPTQPQT) are compositionally biased toward polar residues. Over residues 177–186 (EAEKKAERLR) the composition is skewed to basic and acidic residues. Low complexity predominate over residues 232–248 (SPAPASPAAAESPASPA). Residues 455–469 (EESHSKADTLTEKKN) are compositionally biased toward basic and acidic residues. A Q motif motif is present at residues 561-589 (QKWSQCGLTRPILDTIESLGFEKPTPIQM). The region spanning 592 to 770 (LPVIMSGRDV…KKVLRDPVEI (179 aa)) is the Helicase ATP-binding domain. 605-612 (AKTGSGKT) is an ATP binding site. The DEAD box signature appears at 718 to 721 (DEAD). One can recognise a Helicase C-terminal domain in the interval 797–945 (RLLELLGELY…PVPDRLNEMR (149 aa)). Disordered stretches follow at residues 952 to 1011 (VKAG…DKTK) and 1025 to 1056 (DASK…SGGA). Composition is skewed to basic and acidic residues over residues 967–980 (GLEK…AARM), 997–1011 (EDAP…DKTK), and 1025–1036 (DASKAETEDKHA).

It belongs to the DEAD box helicase family. DDX46/PRP5 subfamily.

It localises to the nucleus. It carries out the reaction ATP + H2O = ADP + phosphate + H(+). ATP-dependent RNA helicase involved spliceosome assembly and in nuclear splicing. Catalyzes an ATP-dependent conformational change of U2 snRNP. Bridges U1 and U2 snRNPs and enables stable U2 snRNP association with intron RNA. The sequence is that of Pre-mRNA-processing ATP-dependent RNA helicase prp-5 (prp-5) from Neurospora crassa (strain ATCC 24698 / 74-OR23-1A / CBS 708.71 / DSM 1257 / FGSC 987).